The following is a 606-amino-acid chain: Serine/threonine-protein kinase A-Raf (606 aa).

Residues 19 to 91 (GTVKVYLPNK…DGEELIVEVL (73 aa)) enclose the RBD domain. The segment at 98 to 144 (MHNFVRKTFFSLAFCDFCLKFLFHGFRCQTCGYKFHQHCSSKVPTVC) adopts a Phorbol-ester/DAG-type zinc-finger fold. Histidine 99, cysteine 112, cysteine 115, cysteine 125, cysteine 128, histidine 133, cysteine 136, and cysteine 144 together coordinate Zn(2+). Phosphoserine is present on residues serine 157 and serine 162. The tract at residues 160–207 (DLSGGSRQHEAPSNRPLNELLTPQGPSPRTQHCDPEHFPFPAPANAPL) is disordered. At threonine 181 the chain carries Phosphothreonine. 2 positions are modified to phosphoserine: serine 186 and serine 214. Residues 240–290 (STDAAGSRGGSDGTPRGSPSPASVSSGRKSPHSKSPAEQRERKSLADDKKK) are disordered. Threonine 253 bears the Phosphothreonine mark. 2 positions are modified to phosphoserine: serine 257 and serine 269. Over residues 274–289 (SPAEQRERKSLADDKK) the composition is skewed to basic and acidic residues. Residues 310 to 570 (VQLLKRIGTG…PQILATIELL (261 aa)) enclose the Protein kinase domain. Residues 316 to 324 (IGTGSFGTV) and lysine 336 each bind ATP. Threonine 318 carries the phosphothreonine modification. Residue aspartate 429 is the Proton acceptor of the active site.

Belongs to the protein kinase superfamily. TKL Ser/Thr protein kinase family. RAF subfamily. Interacts with TH1L/NELFD. Requires Zn(2+) as cofactor. Post-translationally, dephosphorylation of Ser-214 by the SHOC2-MRAS-PP1c (SMP) complex consisting of SHOC2, GTP-bound M-Ras/MRAS and the catalytic subunit of protein phosphatase 1 (PPP1CA, PPP1CB or PPP1CC); this relieves inactivation and stimulates kinase activity. Predominantly in urogenital tissues.

It catalyses the reaction L-seryl-[protein] + ATP = O-phospho-L-seryl-[protein] + ADP + H(+). It carries out the reaction L-threonyl-[protein] + ATP = O-phospho-L-threonyl-[protein] + ADP + H(+). In terms of biological role, involved in the transduction of mitogenic signals from the cell membrane to the nucleus. May also regulate the TOR signaling cascade. Phosphorylates PFKFB2. Its function is as follows. Serves as a positive regulator of myogenic differentiation by inducing cell cycle arrest, the expression of myogenin and other muscle-specific proteins, and myotube formation. In Homo sapiens (Human), this protein is Serine/threonine-protein kinase A-Raf (ARAF).